A 180-amino-acid chain; its full sequence is MATHYSANQYQSAFTPKQLHCWSIPKDFKQHPSTHDDYTQFIANERGHLLAGVPRSQKNPWGTFLGTWDLPTKIPPSKLSLTSRSAEASKRLTNWIQNSEELLHACNGLQPQISGKASGKTDPPRDSSQGQQDPPVEESNKQTPLYRGRSKAESNRSSHRSVSSEKGGITAGDKVLQAQS.

Residues P111–S180 form a disordered region.

This sequence belongs to the Flattop family.

The protein resides in the cytoplasm. It localises to the cytoskeleton. The protein localises to the cilium basal body. Its subcellular location is the cell projection. It is found in the cilium. The protein resides in the apical cell membrane. It localises to the cilium axoneme. In terms of biological role, microtubule inner protein (MIP) part of the dynein-decorated doublet microtubules (DMTs) in cilia axoneme. Acts as a regulator of cilium basal body docking and positioning in mono- and multiciliated cells. Regulates basal body docking and cilia formation in multiciliated lung cells. Regulates kinocilium positioning and stereocilia bundle morphogenesis in the inner ear. This Xenopus laevis (African clawed frog) protein is Protein Flattop.